A 299-amino-acid chain; its full sequence is ATP phosphoribosyltransferase (299 aa).

The protein belongs to the ATP phosphoribosyltransferase family. Long subfamily. Mg(2+) serves as cofactor.

Its subcellular location is the cytoplasm. The enzyme catalyses 1-(5-phospho-beta-D-ribosyl)-ATP + diphosphate = 5-phospho-alpha-D-ribose 1-diphosphate + ATP. The protein operates within amino-acid biosynthesis; L-histidine biosynthesis; L-histidine from 5-phospho-alpha-D-ribose 1-diphosphate: step 1/9. Its activity is regulated as follows. Feedback inhibited by histidine. Catalyzes the condensation of ATP and 5-phosphoribose 1-diphosphate to form N'-(5'-phosphoribosyl)-ATP (PR-ATP). Has a crucial role in the pathway because the rate of histidine biosynthesis seems to be controlled primarily by regulation of HisG enzymatic activity. In Campylobacter jejuni subsp. jejuni serotype O:2 (strain ATCC 700819 / NCTC 11168), this protein is ATP phosphoribosyltransferase.